A 486-amino-acid polypeptide reads, in one-letter code: Betaine aldehyde dehydrogenase (486 aa).

K(+) is bound by residues T23 and D90. G147–W149 is a binding site for NAD(+). Residue K159 is the Charge relay system of the active site. Residues K173–E176 and E226–T229 contribute to the NAD(+) site. L241 serves as a coordination point for K(+). E247 (proton acceptor) is an active-site residue. G249, C281, and E382 together coordinate NAD(+). C281 serves as the catalytic Nucleophile. Position 281 is a cysteine sulfenic acid (-SOH) (C281). Positions 452 and 455 each coordinate K(+). E459 (charge relay system) is an active-site residue.

The protein belongs to the aldehyde dehydrogenase family. In terms of assembly, dimer of dimers. It depends on K(+) as a cofactor.

It catalyses the reaction betaine aldehyde + NAD(+) + H2O = glycine betaine + NADH + 2 H(+). It participates in amine and polyamine biosynthesis; betaine biosynthesis via choline pathway; betaine from betaine aldehyde: step 1/1. Its function is as follows. Involved in the biosynthesis of the osmoprotectant glycine betaine. Catalyzes the irreversible oxidation of betaine aldehyde to the corresponding acid. This Vibrio parahaemolyticus serotype O3:K6 (strain RIMD 2210633) protein is Betaine aldehyde dehydrogenase.